Consider the following 406-residue polypeptide: Eukaryotic initiation factor 4A-I (406 aa).

A disordered region spans residues 1–21 (MSASQDSRSRDNGPDGMEPEG). At serine 2 the chain carries N-acetylserine. Serine 4 carries the post-translational modification Phosphoserine. The Q motif signature appears at 32 to 60 (DSFDDMNLSESLLRGIYAYGFEKPSAIQQ). Positions 63-234 (ILPCIKGYDV…KKFMRDPIRI (172 aa)) constitute a Helicase ATP-binding domain. 76-83 (AQSGTGKT) contacts ATP. Lysine 118 bears the N6-acetyllysine mark. Residue lysine 146 forms a Glycyl lysine isopeptide (Lys-Gly) (interchain with G-Cter in SUMO2) linkage. A Phosphothreonine modification is found at threonine 158. An N6-acetyllysine modification is found at lysine 174. The DEAD box motif lies at 182 to 185 (DEAD). An N6-acetyllysine modification is found at lysine 193. Lysine 225 is covalently cross-linked (Glycyl lysine isopeptide (Lys-Gly) (interchain with G-Cter in SUMO2)). Position 238 is an N6-acetyllysine; alternate (lysine 238). A Glycyl lysine isopeptide (Lys-Gly) (interchain with G-Cter in SUMO2); alternate cross-link involves residue lysine 238. The Helicase C-terminal domain maps to 245-406 (GIRQFYINVE…EMPLNVADLI (162 aa)). Glycyl lysine isopeptide (Lys-Gly) (interchain with G-Cter in SUMO2) cross-links involve residues lysine 309, lysine 369, and lysine 381.

Belongs to the DEAD box helicase family. eIF4A subfamily. In terms of assembly, eIF4F is a multi-subunit complex, the composition of which varies with external and internal environmental conditions. It is composed of at least EIF4A, EIF4E and EIF4G1/EIF4G3. Interacts with PAIP1, EIF4E and UPF2. Found in a complex with XPO7, EIF4A1, ARHGAP1, VPS26A, VPS29, VPS35 and SFN. May interact with NOM1. Interacts with PDCD4; this interferes with the interaction between EIF4A and EIF4G. Interacts with RBM4. Interacts with DDX3X in an RNA-independent manner. Interacts with PKP1 (via N-terminus); the interaction promotes EIF4A1 recruitment to the cap-dependent translation complex and EIF4A1 ATPase activity.

The protein localises to the cytoplasm. It is found in the perinuclear region. The protein resides in the cell membrane. It localises to the stress granule. It catalyses the reaction ATP + H2O = ADP + phosphate + H(+). Functionally, ATP-dependent RNA helicase which is a subunit of the eIF4F complex involved in cap recognition and is required for mRNA binding to ribosome. In the current model of translation initiation, eIF4A unwinds RNA secondary structures in the 5'-UTR of mRNAs which is necessary to allow efficient binding of the small ribosomal subunit, and subsequent scanning for the initiator codon. As a result, promotes cell proliferation and growth. The polypeptide is Eukaryotic initiation factor 4A-I (EIF4A1) (Macaca fascicularis (Crab-eating macaque)).